Here is a 190-residue protein sequence, read N- to C-terminus: MARSTARKRALNTLYEADEKSQDILSLLDERIAHPGAQTPLPDYAIEIVKGVAEHRRQIDMTLDEHSTGWKVRRMGVVDRNILRIAAWEILFTDDVPDKVAIDEALALAKTLCDDDSPAFIHGLLSAVCTAKNAAPAPESVAEEADEESSDSAAAASEPTDEGDVSDSPDSSGASDEPAAPSAEIQPTVD.

The disordered stretch occupies residues 135 to 190; sequence APAPESVAEEADEESSDSAAAASEPTDEGDVSDSPDSSGASDEPAAPSAEIQPTVD. Acidic residues predominate over residues 141 to 150; sequence VAEEADEESS.

The protein belongs to the NusB family.

Its function is as follows. Involved in transcription antitermination. Required for transcription of ribosomal RNA (rRNA) genes. Binds specifically to the boxA antiterminator sequence of the ribosomal RNA (rrn) operons. This Bifidobacterium longum (strain DJO10A) protein is Transcription antitermination protein NusB.